Reading from the N-terminus, the 350-residue chain is Small ribosomal subunit biogenesis GTPase RsgA (350 aa).

Residues 1–17 (MSKNKLSKGQQRRVNAN) are compositionally biased toward polar residues. The interval 1–33 (MSKNKLSKGQQRRVNANHQRRLKTSKEKPDYDD) is disordered. One can recognise a CP-type G domain in the interval 104–273 (TSVLTRPDFY…VIDSPGVREF (170 aa)). Residues 160-163 (NKID) and 214-222 (GQSGVGKSS) each bind GTP. Cys-297, Cys-302, His-304, and Cys-310 together coordinate Zn(2+).

Belongs to the TRAFAC class YlqF/YawG GTPase family. RsgA subfamily. In terms of assembly, monomer. Associates with 30S ribosomal subunit, binds 16S rRNA. The cofactor is Zn(2+).

It is found in the cytoplasm. Its function is as follows. One of several proteins that assist in the late maturation steps of the functional core of the 30S ribosomal subunit. Helps release RbfA from mature subunits. May play a role in the assembly of ribosomal proteins into the subunit. Circularly permuted GTPase that catalyzes slow GTP hydrolysis, GTPase activity is stimulated by the 30S ribosomal subunit. The sequence is that of Small ribosomal subunit biogenesis GTPase RsgA from Escherichia coli (strain SMS-3-5 / SECEC).